The chain runs to 713 residues: Glutamine--fructose-6-phosphate aminotransferase [isomerizing] (713 aa).

The For GATase activity role is filled by C2. Residues 2-316 (CGIFGYVNFL…DDDIAHIYDG (315 aa)) form the Glutamine amidotransferase type-2 domain. SIS domains are found at residues 389 to 528 (WLST…DSIS) and 561 to 703 (CNSS…VDFP).

As to quaternary structure, homotetramer.

It carries out the reaction D-fructose 6-phosphate + L-glutamine = D-glucosamine 6-phosphate + L-glutamate. It participates in nucleotide-sugar biosynthesis; UDP-N-acetyl-alpha-D-glucosamine biosynthesis; alpha-D-glucosamine 6-phosphate from D-fructose 6-phosphate: step 1/1. In terms of biological role, involved in amino sugar synthesis (formation of chitin, supplies the amino sugars of asparagine-linked oligosaccharides of glycoproteins). The chain is Glutamine--fructose-6-phosphate aminotransferase [isomerizing] (GFA1) from Candida albicans (strain SC5314 / ATCC MYA-2876) (Yeast).